Reading from the N-terminus, the 60-residue chain is Large ribosomal subunit protein uL30 (60 aa).

This sequence belongs to the universal ribosomal protein uL30 family. In terms of assembly, part of the 50S ribosomal subunit.

This Albidiferax ferrireducens (strain ATCC BAA-621 / DSM 15236 / T118) (Rhodoferax ferrireducens) protein is Large ribosomal subunit protein uL30.